The primary structure comprises 469 residues: Probable glycine dehydrogenase (decarboxylating) subunit 1 (469 aa).

Belongs to the GcvP family. N-terminal subunit subfamily. The glycine cleavage system is composed of four proteins: P, T, L and H. In this organism, the P 'protein' is a heterodimer of two subunits.

It catalyses the reaction N(6)-[(R)-lipoyl]-L-lysyl-[glycine-cleavage complex H protein] + glycine + H(+) = N(6)-[(R)-S(8)-aminomethyldihydrolipoyl]-L-lysyl-[glycine-cleavage complex H protein] + CO2. Its function is as follows. The glycine cleavage system catalyzes the degradation of glycine. The P protein binds the alpha-amino group of glycine through its pyridoxal phosphate cofactor; CO(2) is released and the remaining methylamine moiety is then transferred to the lipoamide cofactor of the H protein. This is Probable glycine dehydrogenase (decarboxylating) subunit 1 from Staphylothermus marinus (strain ATCC 43588 / DSM 3639 / JCM 9404 / F1).